The following is a 609-amino-acid chain: UvrABC system protein C (609 aa).

The region spanning 16-94 (SSAGVYRMYD…IKQYMPKYNV (79 aa)) is the GIY-YIG domain. The 36-residue stretch at 203–238 (QQVISALVDKMELAAERQAYEQAARFRDQIMALRKV) folds into the UVR domain.

This sequence belongs to the UvrC family. As to quaternary structure, interacts with UvrB in an incision complex.

Its subcellular location is the cytoplasm. Its function is as follows. The UvrABC repair system catalyzes the recognition and processing of DNA lesions. UvrC both incises the 5' and 3' sides of the lesion. The N-terminal half is responsible for the 3' incision and the C-terminal half is responsible for the 5' incision. The sequence is that of UvrABC system protein C from Shewanella baltica (strain OS185).